Consider the following 98-residue polypeptide: NADH-ubiquinone oxidoreductase chain 4L (98 aa).

Helical transmembrane passes span 1-21, 30-50, and 61-81; these read MSMV…GLLI, LLCL…TILT, and IILL…LVMI.

It belongs to the complex I subunit 4L family. Core subunit of respiratory chain NADH dehydrogenase (Complex I) which is composed of 45 different subunits.

It is found in the mitochondrion inner membrane. The catalysed reaction is a ubiquinone + NADH + 5 H(+)(in) = a ubiquinol + NAD(+) + 4 H(+)(out). Functionally, core subunit of the mitochondrial membrane respiratory chain NADH dehydrogenase (Complex I) which catalyzes electron transfer from NADH through the respiratory chain, using ubiquinone as an electron acceptor. Part of the enzyme membrane arm which is embedded in the lipid bilayer and involved in proton translocation. The chain is NADH-ubiquinone oxidoreductase chain 4L (MT-ND4L) from Martes americana (American marten).